The sequence spans 180 residues: Bifunctional protein PyrR (180 aa).

A PRPP-binding motif is present at residues 101–113; sequence VILVDDVLYTGRT.

This sequence belongs to the purine/pyrimidine phosphoribosyltransferase family. PyrR subfamily. As to quaternary structure, homodimer and homohexamer; in equilibrium.

It catalyses the reaction UMP + diphosphate = 5-phospho-alpha-D-ribose 1-diphosphate + uracil. Its function is as follows. Regulates transcriptional attenuation of the pyrimidine nucleotide (pyr) operon by binding in a uridine-dependent manner to specific sites on pyr mRNA. This disrupts an antiterminator hairpin in the RNA and favors formation of a downstream transcription terminator, leading to a reduced expression of downstream genes. Functionally, also displays a weak uracil phosphoribosyltransferase activity which is not physiologically significant. This Bacillus cereus (strain ATCC 14579 / DSM 31 / CCUG 7414 / JCM 2152 / NBRC 15305 / NCIMB 9373 / NCTC 2599 / NRRL B-3711) protein is Bifunctional protein PyrR.